The primary structure comprises 244 residues: Uridylate kinase (244 aa).

17-20 (KLSG) serves as a coordination point for ATP. Gly-59 provides a ligand contact to UMP. ATP is bound by residues Gly-60 and Arg-64. UMP contacts are provided by residues Asp-79 and 140–147 (TGNPFFTT). ATP contacts are provided by Thr-167, Tyr-173, and Asp-176.

Belongs to the UMP kinase family. Homohexamer.

The protein resides in the cytoplasm. It carries out the reaction UMP + ATP = UDP + ADP. The protein operates within pyrimidine metabolism; CTP biosynthesis via de novo pathway; UDP from UMP (UMPK route): step 1/1. Its activity is regulated as follows. Inhibited by UTP. Catalyzes the reversible phosphorylation of UMP to UDP. The polypeptide is Uridylate kinase (Hahella chejuensis (strain KCTC 2396)).